The following is a 59-amino-acid chain: Large ribosomal subunit protein uL30 (59 aa).

Belongs to the universal ribosomal protein uL30 family. In terms of assembly, part of the 50S ribosomal subunit.

The chain is Large ribosomal subunit protein uL30 from Mycolicibacterium vanbaalenii (strain DSM 7251 / JCM 13017 / BCRC 16820 / KCTC 9966 / NRRL B-24157 / PYR-1) (Mycobacterium vanbaalenii).